The chain runs to 98 residues: NADH-ubiquinone oxidoreductase chain 4L (98 aa).

The next 3 helical transmembrane spans lie at 2-22 (PSIS…MLIF), 29-49 (SLLC…LTIL), and 61-81 (ILLL…LVTV).

This sequence belongs to the complex I subunit 4L family. As to quaternary structure, core subunit of respiratory chain NADH dehydrogenase (Complex I) which is composed of 45 different subunits.

The protein resides in the mitochondrion inner membrane. The catalysed reaction is a ubiquinone + NADH + 5 H(+)(in) = a ubiquinol + NAD(+) + 4 H(+)(out). Core subunit of the mitochondrial membrane respiratory chain NADH dehydrogenase (Complex I) which catalyzes electron transfer from NADH through the respiratory chain, using ubiquinone as an electron acceptor. Part of the enzyme membrane arm which is embedded in the lipid bilayer and involved in proton translocation. This is NADH-ubiquinone oxidoreductase chain 4L (MT-ND4L) from Eulemur rubriventer (Red-bellied lemur).